We begin with the raw amino-acid sequence, 569 residues long: Urease subunit alpha (569 aa).

The Ni(2+) site is built by His-136, His-138, and Lys-219. Position 219 is an N6-carboxylysine (Lys-219). Residue His-221 participates in substrate binding. The Ni(2+) site is built by His-248 and His-274. His-322 functions as the Proton donor in the catalytic mechanism. Asp-362 provides a ligand contact to Ni(2+).

This sequence belongs to the metallo-dependent hydrolases superfamily. Urease alpha subunit family. As to quaternary structure, heterotrimer of UreA (gamma), UreB (beta) and UreC (alpha) subunits. Three heterotrimers associate to form the active enzyme. Ni cation serves as cofactor. In terms of processing, carboxylation allows a single lysine to coordinate two nickel ions.

It is found in the cytoplasm. It carries out the reaction urea + 2 H2O + H(+) = hydrogencarbonate + 2 NH4(+). It participates in nitrogen metabolism; urea degradation; CO(2) and NH(3) from urea (urease route): step 1/1. The polypeptide is Urease subunit alpha (Dinoroseobacter shibae (strain DSM 16493 / NCIMB 14021 / DFL 12)).